A 199-amino-acid polypeptide reads, in one-letter code: FMN-dependent NADH:quinone oxidoreductase 2 (199 aa).

FMN contacts are provided by residues Ser10, 16–18 (SVS), and 96–99 (MYNF).

Belongs to the azoreductase type 1 family. In terms of assembly, homodimer. The cofactor is FMN.

The catalysed reaction is 2 a quinone + NADH + H(+) = 2 a 1,4-benzosemiquinone + NAD(+). It carries out the reaction N,N-dimethyl-1,4-phenylenediamine + anthranilate + 2 NAD(+) = 2-(4-dimethylaminophenyl)diazenylbenzoate + 2 NADH + 2 H(+). Functionally, quinone reductase that provides resistance to thiol-specific stress caused by electrophilic quinones. Also exhibits azoreductase activity. Catalyzes the reductive cleavage of the azo bond in aromatic azo compounds to the corresponding amines. This is FMN-dependent NADH:quinone oxidoreductase 2 from Pseudomonas fluorescens (strain ATCC BAA-477 / NRRL B-23932 / Pf-5).